The primary structure comprises 689 residues: uncharacterized protein (689 aa).

Composition is skewed to low complexity over residues 347-359 (RPPS…AGEP) and 370-388 (ASTA…TRPT). A disordered region spans residues 347-689 (RPPSGSGEAA…KSQPPAAHTA (343 aa)). The span at 405–480 (ARPESEEQTD…QESQVARRDE (76 aa)) shows a compositional bias: basic and acidic residues. Composition is skewed to pro residues over residues 515 to 539 (VPGP…PPMT) and 550 to 569 (RCPP…PPRP). Composition is skewed to low complexity over residues 570-581 (SSDTPLSAVSRP) and 591-610 (TARV…YSPA). Residues 611–620 (PLSPPSPVSP) are compositionally biased toward pro residues. A compositionally biased stretch (low complexity) spans 666-676 (SVPSSASPSAS).

This is an uncharacterized protein from Homo sapiens (Human).